The primary structure comprises 62 residues: DNA-directed RNA polymerase subunit Rpo10 (62 aa).

Residues cysteine 6, cysteine 9, cysteine 43, and cysteine 44 each contribute to the Zn(2+) site.

It belongs to the archaeal Rpo10/eukaryotic RPB10 RNA polymerase subunit family. In terms of assembly, part of the RNA polymerase complex. Requires Zn(2+) as cofactor.

Its subcellular location is the cytoplasm. It catalyses the reaction RNA(n) + a ribonucleoside 5'-triphosphate = RNA(n+1) + diphosphate. Functionally, DNA-dependent RNA polymerase (RNAP) catalyzes the transcription of DNA into RNA using the four ribonucleoside triphosphates as substrates. This is DNA-directed RNA polymerase subunit Rpo10 from Methanococcoides burtonii (strain DSM 6242 / NBRC 107633 / OCM 468 / ACE-M).